We begin with the raw amino-acid sequence, 117 residues long: MITLFLILCYFILIFNIIVPAISEKMRRERAAYVNYKRLNKNFICVDDRLFSYNFTTSGIKAKVAVDNKNVPIPCSEINEVNNNKDVDTLYCDKDRDDIPGFTRSCYRAYSDLFFTT.

The chain crosses the membrane as a helical; Signal-anchor for type III membrane protein span at residues 1 to 21 (MITLFLILCYFILIFNIIVPA). Residues 22–117 (ISEKMRRERA…RAYSDLFFTT (96 aa)) are Virion surface-facing.

Belongs to the orthopoxvirus OPG147 family. In terms of assembly, part of a stable entry-fusion complex (EFC) which is at least composed of proteins OPG143, OPG147, OPG155, OPG086, OPG094, OPG107, OPG104, and OPG099. Formation of the viral membrane is necessary for the assembly of the complex. In terms of processing, contains two intramolecular disulfide bonds. They are created by the viral disulfide bond formation pathway, a poxvirus-specific pathway that operates on the cytoplasmic side of the MV membranes.

It is found in the virion membrane. Its function is as follows. Envelope protein part of the entry-fusion complex responsible for the virus membrane fusion with host cell membrane during virus entry. Also plays a role in cell-cell fusion (syncytium formation). This Homo sapiens (Human) protein is Virion membrane protein OPG147 (OPG147).